The sequence spans 450 residues: Pancreatic triacylglycerol lipase (450 aa).

3 cysteine pairs are disulfide-bonded: C4-C10, C91-C102, and C91-C104. S153 (nucleophile) is an active-site residue. An N-linked (GlcNAc...) asparagine glycan is attached at N167. The active-site Charge relay system is D177. Residues E188, R191, D193, and D196 each contribute to the Ca(2+) site. C238 and C262 are disulfide-bonded. The active-site Charge relay system is H264. 3 disulfides stabilise this stretch: C286-C297, C300-C305, and C434-C450. The 112-residue stretch at 339–450 folds into the PLAT domain; the sequence is WRYKVSVTLS…EEVLLTLNPC (112 aa).

It belongs to the AB hydrolase superfamily. Lipase family. Forms a 1:1 stoichiometric complex with (pro)colipase/CLPS.

The protein localises to the secreted. The enzyme catalyses a triacylglycerol + H2O = a diacylglycerol + a fatty acid + H(+). It carries out the reaction 1,2,3-tributanoylglycerol + H2O = dibutanoylglycerol + butanoate + H(+). The catalysed reaction is 1,2,3-tri-(9Z-octadecenoyl)-glycerol + H2O = di-(9Z)-octadecenoylglycerol + (9Z)-octadecenoate + H(+). It catalyses the reaction all-trans-retinyl hexadecanoate + H2O = all-trans-retinol + hexadecanoate + H(+). The enzyme catalyses 1,2-di-(9Z-octadecenoyl)-glycerol + H2O = (9Z-octadecenoyl)-glycerol + (9Z)-octadecenoate + H(+). With respect to regulation, inhibited by bile salts, is reactivated by (pro)colipase/CLPS. Plays an important role in fat metabolism. It preferentially splits the esters of long-chain fatty acids at positions 1 and 3, producing mainly 2-monoacylglycerol and free fatty acids, and shows considerably higher activity against insoluble emulsified substrates than against soluble ones. This chain is Pancreatic triacylglycerol lipase (PNLIP), found in Sus scrofa (Pig).